The sequence spans 512 residues: Maturase K (512 aa).

The protein belongs to the intron maturase 2 family. MatK subfamily.

The protein resides in the plastid. The protein localises to the chloroplast. Its function is as follows. Usually encoded in the trnK tRNA gene intron. Probably assists in splicing its own and other chloroplast group II introns. In Amorphophallus titanum (Titan arum), this protein is Maturase K.